The chain runs to 1159 residues: Anillin-like protein 1 (1159 aa).

Disordered regions lie at residues 43–81 (VASP…MKEN), 266–327 (QQVS…TKTT), 409–430 (KLKK…APVP), 549–608 (AIPK…GDVI), and 629–699 (FGFM…KSSS). Polar residues predominate over residues 50–60 (FGSSSKCNDGP). The span at 287–327 (ASSATSSSSSTTTLTTISGASGSTTSGISNAPQDSASTKTT) shows a compositional bias: low complexity. The span at 421–430 (PPAPTSAPVP) shows a compositional bias: pro residues. Positions 564–584 (SASSLYSQGARSNTASPASKS) are enriched in polar residues. A compositionally biased stretch (acidic residues) spans 660-684 (VIEEETENEDESEPYEPEEEEDDDA). Positions 1029 to 1147 (DITYHGFLSM…WLSLINSTSK (119 aa)) constitute a PH domain.

As to expression, strongly expressed in dividing neuroblasts under the ventral epidermal cells during ventral enclosure.

It is found in the cytoplasm. The protein localises to the cell cortex. The protein resides in the cytoskeleton. It localises to the spindle. Its subcellular location is the midbody. It is found in the cleavage furrow. Functionally, required for contractile events in embryos that occur prior to mitosis, such as cortical ruffling and pseudocleavage. Promotes membrane ruffling by organizing cortical patches of septins and myosin II. Not generally required for cytokinesis in mitotic cells. Required for the asymmetric cleavage events that extrude the two polar bodies during oocyte meiosis. Not required for meiotic contractile ring assembly, initiation or closure but is required for the transformation of the contractile ring from a disk above the spindle to a tube around the spindle midzone. Promotes astral microtubule-directed cortical myosin polarization and cleavage furrow ingression. Regulates neuroblast cytokinesis during mid- to late-embryogenesis and is required for ventral enclosure. In Caenorhabditis elegans, this protein is Anillin-like protein 1 (ani-1).